The sequence spans 455 residues: Probable ATP-dependent RNA helicase DDX47 (455 aa).

The tract at residues 1–21 is disordered; the sequence is MAADEEPDSPSGALQTAAEEE. Position 2 is an N-acetylalanine (Ala2). Residue Ser9 is modified to Phosphoserine. The short motif at 24–52 is the Q motif element; that stretch reads KTFKDLGVTDVLCEACDQLGWAKPTKIQI. A Helicase ATP-binding domain is found at 55 to 226; the sequence is IPLALQGRDI…RAALKNPVKC (172 aa). ATP is bound at residue 68 to 75; sequence AETGSGKT. The residue at position 149 (Thr149) is a Phosphothreonine. Residues 174 to 177 carry the DEAD box motif; that stretch reads DEAD. In terms of domain architecture, Helicase C-terminal spans 237–397; the sequence is KLQQYYLFIP…VFPTQDEEVM (161 aa). The segment at 412–455 is disordered; sequence MELREHGEKKKRKREDAGDDDDKEGAIGVRNKVAGGKMKKRKGR.

It belongs to the DEAD box helicase family. DDX47/RRP3 subfamily. As to quaternary structure, interacts with AGO1 and AGO2. Interacts with GABARAP. Interacts with NOL8; the interaction is RNA-dependent.

Its subcellular location is the nucleus. It localises to the nucleolus. The catalysed reaction is ATP + H2O = ADP + phosphate + H(+). Its function is as follows. Involved in apoptosis. May have a role in rRNA processing and mRNA splicing. Associates with pre-rRNA precursors. The chain is Probable ATP-dependent RNA helicase DDX47 (Ddx47) from Mus musculus (Mouse).